We begin with the raw amino-acid sequence, 585 residues long: uncharacterized protein (585 aa).

Residues 27 to 59 form a disordered region; the sequence is DDSERSVKSVSVSISDDEDSKTDVQDNMATPST.

This is an uncharacterized protein from Saccharomyces cerevisiae (strain ATCC 204508 / S288c) (Baker's yeast).